The following is a 334-amino-acid chain: MAVAAVGRPRALRCPLLLLLSLLLVAGPALGWNDPDRILLRDVKALTLYSDRYTTSRRLDPIPQLKCVGGTAGCEAYTPRVIQCQNKGWDGYDVQWECKTDLDIAYKFGKTVVSCEGYESSEDQYVLRGSCGLEYNLDYTELGLKKLKESGKHQGFSDYYHKLYSSDSCGFITIAVLFVLAFAVYKLFLSDGQGSPPPYSEHPPYSEHSQRFASAAGAPPPGFKSEFTGPQNTGYGASSGFGSAFGGQGYGSSGPGFWSGLGAGGLLGYLFGSNRAATPFSDSWYHPAYPPSHSGAWNSRAYSPLGGGAGSYCASSNADSRTRTASGYGGTRRR.

The first 31 residues, 1–31 (MAVAAVGRPRALRCPLLLLLSLLLVAGPALG), serve as a signal peptide directing secretion. The Lumenal segment spans residues 32–168 (WNDPDRILLR…YYHKLYSSDS (137 aa)). Residues 169-189 (CGFITIAVLFVLAFAVYKLFL) traverse the membrane as a helical segment. The Cytoplasmic segment spans residues 190 to 334 (SDGQGSPPPY…ASGYGGTRRR (145 aa)). Disordered stretches follow at residues 198–219 (PYSE…AGAP) and 310–334 (GSYC…TRRR). Residues 313-325 (CASSNADSRTRTA) show a composition bias toward polar residues.

This sequence belongs to the SARAF family. Interacts with STIM1; the interaction is inhibited by the interaction of STIM1 with EFHB.

The protein resides in the endoplasmic reticulum membrane. In terms of biological role, negative regulator of store-operated Ca(2+) entry (SOCE) involved in protecting cells from Ca(2+) overfilling. In response to cytosolic Ca(2+) elevation after endoplasmic reticulum Ca(2+) refilling, promotes a slow inactivation of STIM (STIM1 or STIM2)-dependent SOCE activity: possibly act by facilitating the deoligomerization of STIM to efficiently turn off ORAI when the endoplasmic reticulum lumen is filled with the appropriate Ca(2+) levels, and thus preventing the overload of the cell with excessive Ca(2+) ions. This is Store-operated calcium entry-associated regulatory factor (Saraf) from Mus musculus (Mouse).